Consider the following 178-residue polypeptide: Endothelin-2 (178 aa).

Residues 1–24 (MVSVPTAWCSVALALLVALHEGKD) form the signal peptide. The propeptide occupies 25–46 (QAAATLEQPASSPRARAAHLRL). 2 cysteine pairs are disulfide-bonded: C49-C63 and C51-C59. Residues 70–178 (VNTPGQTAPY…RTTHSRHRKR (109 aa)) constitute a propeptide that is removed on maturation. The segment at 96–111 (CECSSARDPACATFCH) is endothelin-like. The segment at 154–178 (KTHFAKRQQEATREPRTTHSRHRKR) is disordered. A compositionally biased stretch (basic and acidic residues) spans 160 to 170 (RQQEATREPRT).

It belongs to the endothelin/sarafotoxin family.

Its subcellular location is the secreted. Its function is as follows. Endothelins are endothelium-derived vasoconstrictor peptides. The chain is Endothelin-2 (EDN2) from Oryctolagus cuniculus (Rabbit).